The sequence spans 293 residues: DNA-directed RNA polymerase III subunit RPC6 (293 aa).

The protein belongs to the eukaryotic RPC34/RPC39 RNA polymerase subunit family. As to quaternary structure, component of the RNA polymerase III (Pol III) complex consisting of 17 subunits.

The protein resides in the nucleus. Functionally, DNA-dependent RNA polymerase catalyzes the transcription of DNA into RNA using the four ribonucleoside triphosphates as substrates. Specific peripheric component of RNA polymerase III which synthesizes small RNAs, such as 5S rRNA and tRNAs. This chain is DNA-directed RNA polymerase III subunit RPC6, found in Drosophila melanogaster (Fruit fly).